Consider the following 92-residue polypeptide: Small ribosomal subunit protein uS19 (92 aa).

Belongs to the universal ribosomal protein uS19 family.

Protein S19 forms a complex with S13 that binds strongly to the 16S ribosomal RNA. This chain is Small ribosomal subunit protein uS19, found in Ruegeria pomeroyi (strain ATCC 700808 / DSM 15171 / DSS-3) (Silicibacter pomeroyi).